Consider the following 62-residue polypeptide: Small ribosomal subunit protein bS21C (62 aa).

The disordered stretch occupies residues 43–62; the sequence is EKSKRKKLALHKQSKRRFRT. Positions 45–62 are enriched in basic residues; it reads SKRKKLALHKQSKRRFRT.

The protein belongs to the bacterial ribosomal protein bS21 family.

This chain is Small ribosomal subunit protein bS21C, found in Trichormus variabilis (strain ATCC 29413 / PCC 7937) (Anabaena variabilis).